Consider the following 328-residue polypeptide: 5'-AMP-activated protein kinase subunit gamma (328 aa).

4 CBS domains span residues 42-103 (VSYR…PDKF), 123-186 (IQPY…CKEI), 199-259 (ISTN…YNDL), and 268-328 (MRRS…FAES). Residues isoleucine 47, arginine 150, arginine 151, 171–174 (TQYR), 227–228 (SS), and 297–299 (RVH) contribute to the ADP site. Position 150 (arginine 150) interacts with AMP. Arginine 150 serves as a coordination point for ATP. An AMP-binding site is contributed by 227-228 (SS). An ATP-binding site is contributed by 227–228 (SS). ATP contacts are provided by residues arginine 300 and 313–318 (VLTLSD). 315 to 318 (TLSD) contacts ADP. 315-318 (TLSD) serves as a coordination point for AMP.

It belongs to the 5'-AMP-activated protein kinase gamma subunit family. In terms of assembly, AMPK is a heterotrimer of an alpha catalytic subunit, a beta and a gamma non-catalytic subunits.

The protein resides in the nucleus. It localises to the cytoplasm. In terms of biological role, adenine nucleotides-binding subunit gamma of AMP-activated protein kinase (AMPK), an energy sensor protein kinase that plays a key role in regulating cellular energy metabolism. In response to reduction of intracellular ATP levels, AMPK activates energy-producing pathways and inhibits energy-consuming processes: inhibits protein, carbohydrate and lipid biosynthesis, as well as cell growth and proliferation. AMPK acts via direct phosphorylation of metabolic enzymes, and by longer-term effects via phosphorylation of transcription regulators. Gamma non-catalytic subunit mediates binding to AMP, ADP and ATP, leading to activate or inhibit AMPK: AMP-binding results in allosteric activation of alpha catalytic subunit (SNF1) both by inducing phosphorylation and preventing dephosphorylation of catalytic subunits. This is 5'-AMP-activated protein kinase subunit gamma (SNF4) from Kluyveromyces lactis (strain ATCC 8585 / CBS 2359 / DSM 70799 / NBRC 1267 / NRRL Y-1140 / WM37) (Yeast).